A 1380-amino-acid chain; its full sequence is Carboxypeptidase D (1380 aa).

Positions 1–31 (MASGRDERPPWRLGRLLLLMCLLLLGSSARA) are cleaved as a signal peptide. Over 32-1299 (AHIKKAEATT…DNRIFGLPRE (1268 aa)) the chain is Extracellular. The 324-residue stretch at 57-380 (RYYHEEELES…ESLITLIEKV (324 aa)) folds into the Peptidase M14 1 domain. Residues H139 and E142 each coordinate Zn(2+). The short motif at 162-164 (RGD) is the Cell attachment site element. Residue N172 is glycosylated (N-linked (GlcNAc...) asparagine). Positions 190 to 232 (AREGDCGFGDGGPSGASGRDNSRGRDLNRSFPDQFSTGEPPAL) are disordered. A compositionally biased stretch (gly residues) spans 195–204 (CGFGDGGPSG). N-linked (GlcNAc...) asparagine glycosylation occurs at N217. Residue H257 participates in Zn(2+) binding. Y265 carries the post-translational modification Phosphotyrosine. A Phosphoserine modification is found at S270. E350 functions as the Proton donor/acceptor in the catalytic mechanism. N-linked (GlcNAc...) asparagine glycans are attached at residues N399, N410, N429, and N522. The region spanning 502-792 (HHHHFPDMEI…RSLIQFMKQV (291 aa)) is the Peptidase M14 2 domain. Zn(2+) contacts are provided by H564 and E567. N-linked (GlcNAc...) asparagine glycosylation occurs at N626. H671 lines the Zn(2+) pocket. The Proton donor/acceptor role is filled by E762. N-linked (GlcNAc...) asparagine glycosylation is found at N811, N855, N867, and N879. Residues 874-899 (STDSNNESKKGKGASSSTNDASDPTT) are disordered. Positions 887–897 (ASSSTNDASDP) are enriched in polar residues. In terms of domain architecture, Peptidase M14 3 spans 932–1211 (RYHSYKDLSE…RSLLSMLVEV (280 aa)). N-linked (GlcNAc...) asparagine glycosylation is found at N955, N978, N1070, and N1142. The helical transmembrane segment at 1300–1320 (LVVTVSGATMSALILTACIIW) threads the bilayer. Residues C1317, C1321, and C1323 are each lipidated (S-palmitoyl cysteine). The Cytoplasmic segment spans residues 1321-1380 (CICSIKSNRHKDGFHRLRQHHDEYEDEIRMMSTGSKKSLLSHEFQDETDTEEETLYSSKH). 2 positions are modified to phosphoserine: S1358 and S1361. The disordered stretch occupies residues 1359–1380 (LLSHEFQDETDTEEETLYSSKH). A phosphothreonine mark is found at T1368 and T1370.

This sequence belongs to the peptidase M14 family. Requires Zn(2+) as cofactor. Highly expressed in placenta, pancreas and hepatoma cells. Lower levels found in skeletal muscle, heart and colon carcinoma and melanoma cell lines.

Its subcellular location is the cell membrane. It catalyses the reaction Releases C-terminal Arg and Lys from polypeptides.. The protein is Carboxypeptidase D (CPD) of Homo sapiens (Human).